We begin with the raw amino-acid sequence, 199 residues long: Hematopoietic prostaglandin D synthase (199 aa).

Residues 2–79 (PNYKLTYFNL…YLARESGLAG (78 aa)) form the GST N-terminal domain. Glutathione contacts are provided by residues Y8, R14, W39, 49-51 (GKV), and 63-64 (QS). One can recognise a GST C-terminal domain in the interval 81–199 (TPVEQALADA…WIQKRPKTAI (119 aa)).

The protein belongs to the GST superfamily. Sigma family. Glutathione is required as a cofactor. As to expression, highly expressed in liver, kidney, small intestine and colon, moderately in pancreas, bone marrow, lung and ovary, and expressed at low levels in spleen, thymus, heart and brain. Not detected in oviduct or skin (at protein level). Expressed in liver.

The protein resides in the cytoplasm. It carries out the reaction prostaglandin H2 = prostaglandin D2. The catalysed reaction is RX + glutathione = an S-substituted glutathione + a halide anion + H(+). It catalyses the reaction 2-glyceryl-prostaglandin H2 = 2-glyceryl-prostaglandin D2. Functionally, bifunctional enzyme which catalyzes both the conversion of PGH2 to PGD2, a prostaglandin involved in smooth muscle contraction/relaxation and a potent inhibitor of platelet aggregation, and the conjugation of glutathione with a wide range of aryl halides, organic isothiocyanates and alpha,beta-unsaturated carbonyls. Also exhibits low glutathione-peroxidase activity towards cumene hydroperoxide and t-butyl hydroperoxide. The protein is Hematopoietic prostaglandin D synthase (HPGDS) of Gallus gallus (Chicken).